Consider the following 244-residue polypeptide: Mast cell protease 2 (244 aa).

Positions Met1–Ala18 are cleaved as a signal peptide. Residues Glu19 to Glu20 constitute a propeptide, activation peptide. The region spanning Ile21–Lys242 is the Peptidase S1 domain. Residue Asn44 is glycosylated (N-linked (GlcNAc...) asparagine). Residues Cys50 and Cys66 are joined by a disulfide bond. Active-site charge relay system residues include His65 and Asp109. Cystine bridges form between Cys143-Cys208 and Cys174-Cys187. The active-site Charge relay system is the Ser202.

The protein belongs to the peptidase S1 family. Granzyme subfamily. Mucosal mast cells.

The chain is Mast cell protease 2 (Mcpt2) from Mus musculus (Mouse).